Reading from the N-terminus, the 127-residue chain is Ribonuclease VapC6 (127 aa).

Residues 26 to 120 form the PINc domain; sequence EPQRAEFCRS…ERHLPDIRVR (95 aa). D86 serves as a coordination point for Mg(2+).

Belongs to the PINc/VapC protein family. Requires Mg(2+) as cofactor.

Toxic component of a type II toxin-antitoxin (TA) system. An RNase. The cognate antitoxin is VapB6. In Mycobacterium tuberculosis (strain CDC 1551 / Oshkosh), this protein is Ribonuclease VapC6.